The following is a 476-amino-acid chain: Abscisic acid 8'-hydroxylase CYP707A1 (476 aa).

Residues 5–25 traverse the membrane as a helical segment; it reads FEIFLYISMFVLGYLSYYFCF. Residue Cys422 coordinates heme.

This sequence belongs to the cytochrome P450 family. Requires heme as cofactor. Expressed in ovaries (specifically in ovules and placenta), sepals, petals and pedicels.

It is found in the membrane. It catalyses the reaction 2-cis-(+)-abscisate + reduced [NADPH--hemoprotein reductase] + O2 = (+)-8'-hydroxyabscisate + oxidized [NADPH--hemoprotein reductase] + H2O + H(+). It functions in the pathway plant hormone degradation; abscisic acid degradation. In terms of biological role, involved in the oxidative degradation of abscisic acid, especially in pollinated ovaries. The protein is Abscisic acid 8'-hydroxylase CYP707A1 of Solanum lycopersicum (Tomato).